A 3961-amino-acid polypeptide reads, in one-letter code: Replicase polyprotein 1ab (3961 aa).

The C4-type; atypical zinc-finger motif lies at 8-28; that stretch reads CTCTPNARVFVAEGQVYCTRC. The Peptidase C31 domain occupies 69–180; sequence ECSPTGACWL…EDFCPFECAM (112 aa). The interval 69–182 is PCP1-alpha; sequence ECSPTGACWL…FCPFECAMAD (114 aa). Catalysis depends on for Nsp1-alpha papain-like cysteine proteinase activity residues Cys76 and His146. Residues 199 to 200 are important for host EIF2AK2 inhibition; that stretch reads VS. The interval 263–382 is PCP1-beta; the sequence is DTVPEGNCWW…IFRFGSHKWY (120 aa). The 121-residue stretch at 263–383 folds into the Peptidase C32 domain; that stretch reads DTVPEGNCWW…FRFGSHKWYG (121 aa). Residues Cys270 and His339 each act as for Nsp1-beta papain-like cysteine proteinase activity in the active site. The tract at residues 426-513 is OTU-like; the sequence is LKLYSPPAEG…GEHWTVSVNP (88 aa). Residues 428-535 enclose the Peptidase C33 domain; that stretch reads LYSPPAEGNC…QGCCEHKGGL (108 aa). Catalysis depends on for Nsp2 cysteine proteinase activity residues Cys437 and His506. Over residues 810–819 the composition is skewed to pro residues; it reads WTPPPPPPRV. Disordered stretches follow at residues 810-875, 899-918, and 1148-1191; these read WTPP…FPTP, TPLD…SRPM, and TGEL…PADT. Transmembrane regions (helical) follow at residues 1266-1286, 1296-1316, 1368-1388, 1583-1603, 1648-1668, 1685-1705, and 1719-1739; these read FCLF…LGVF, GVFG…SDPV, VWHF…GAYV, LVAA…GVYV, LTAL…LIFV, CILL…LCVF, and ILWL…LAVV. The tract at residues 1266-1388 is HD1; the sequence is FCLFLCYSYP…ADCILAGAYV (123 aa). An HD2 region spans residues 1583-1745; that stretch reads LVAALHVACS…LAVVLLVSLW (163 aa). The Peptidase S32 domain occupies 1810 to 2013; that stretch reads GAFRTQKPSL…ALLAAKPELE (204 aa). Active-site charge relay system; for 3C-like serine proteinase activity residues include His1848, Asp1873, and Ser1927. The next 5 helical transmembrane spans lie at 2036–2056, 2060–2080, 2092–2112, 2137–2157, and 2162–2182; these read WTPL…AVLV, FSFG…VLMI, LSLG…LAVT, SPVP…LYLF, and LHYV…RYFA. An HD3 region spans residues 2036–2157; sequence WTPLVAVGFF…HLLAIILYLF (122 aa). The region spanning 2488–2651 is the NiRAN domain; the sequence is IIDKLQGLTK…LPYKLYPVRG (164 aa). The region spanning 2890 to 3024 is the RdRp catalytic domain; that stretch reads GRCLEADLAS…YAESPSMPNY (135 aa). One can recognise an AV ZBD domain in the interval 3145–3208; that stretch reads GKKSRMCGYC…PPLGKGTSPL (64 aa). Residues Cys3151, Cys3154, Cys3164, Cys3169, His3172, His3174, His3176, His3178, Cys3185, His3187, Cys3194, and Cys3197 each coordinate Zn(2+). The (+)RNA virus helicase ATP-binding domain occupies 3265–3417; it reads ASTALLPTCK…VFDIMPQTQL (153 aa). Position 3293 to 3300 (3293 to 3300) interacts with ATP; the sequence is GPPGAGKT. Residues 3418 to 3546 form the (+)RNA virus helicase C-terminal domain; it reads KTIWRFGQNI…AVHRDEQLIV (129 aa). Positions 3585-3681 constitute an AV-Nsp11N/CoV-Nsp15M domain; sequence EGSSSPLPKV…LTKFVRGEAQ (97 aa). In terms of domain architecture, NendoU spans 3683 to 3805; that stretch reads LPETVFSTGR…MVWKGKTAYF (123 aa). Residues His3714, His3729, and Lys3758 contribute to the active site.

This sequence belongs to the arteriviridae polyprotein family. As to quaternary structure, nsp1-alpha papain-like: Interacts with host RNF31. In terms of assembly, interacts with host EIF2AK2; this interaction occurs in host stress granules and leads to EIF2AK2 inhibition. Interacts with host G3BP1; this interaction probably plays a role in Nsp1-beta-mediated inhibition of host EIF2AK2. Interacts with host DDX18; this interaction redistributes host DDX18 to the cytoplasm. As to quaternary structure, interacts with host IFITM1. In terms of assembly, interacts with host DDX5. Interacts with host OTULIN. As to quaternary structure, interacts with host LGALS3. Post-translationally, specific enzymatic cleavages in vivo by its own proteases yield mature proteins. Nsp1 is autocleaved into two subunits, Nsp1-alpha and Nsp1-beta. There are two alternative pathways for processing. Either nsp4-5 is cleaved, which represents the major pathway or the nsp5-6 and nsp6-7 are processed, which represents the minor pathway. The major pathway occurs when nsp2 acts as a cofactor for nsp4.

It is found in the host nucleus. Its subcellular location is the host cytoplasm. The protein localises to the host membrane. It localises to the host endoplasmic reticulum. The protein resides in the host perinuclear region. It catalyses the reaction RNA(n) + a ribonucleoside 5'-triphosphate = RNA(n+1) + diphosphate. It carries out the reaction ATP + H2O = ADP + phosphate + H(+). The catalysed reaction is Thiol-dependent hydrolysis of ester, thioester, amide, peptide and isopeptide bonds formed by the C-terminal Gly of ubiquitin (a 76-residue protein attached to proteins as an intracellular targeting signal).. The enzyme catalyses uridylyl-uridylyl-ribonucleotide-RNA = a 3'-end uridylyl-2',3'-cyclophospho-uridine-RNA + a 5'-end dephospho-ribonucleoside-RNA. Contains the activities necessary for the transcription of negative stranded RNA, leader RNA, subgenomic mRNAs and progeny virion RNA as well as proteinases responsible for the cleavage of the polyprotein into functional products. Its function is as follows. Inhibits host IFN-beta production. Plays a role in the degradation of the host transcriptional activator CREBBP protein. The degradation of host CREBBP which is a key component of the IFN enhanceosome is likely responsible for the inhibition of interferon mediated by Nsp1-alpha. Also participates in the inhibition of host NF-kappa-B activation by counteracting LUBAC-dependent induction of NF-kappa-B. Reduces host NEMO ubiquitination by blocking the interaction between the two LUBAC complex components RNF31 and SHARPIN. Functionally, plays a role in blocking host mRNA nuclear export to the cytoplasm and subversion of host protein synthesis. Additionally, inhibits the interferon-activated JAK/STAT signal transduction by mediating the ubiquitination and subsequent proteasomal degradation of host KPNA1. Repurposes the host antiviral stress granules into a proviral platform to counteract the EIF2AK2/PKR restriction, thereby regulating the host inflammatory response. In terms of biological role, multifunctional protein that acts as a viral protease and as a viral antagonist of host immune response. Cleaves the nsp2/nsp3 site in the viral polyprotein. Displays deubiquitinating activity that cleaves both ubiquitinated and ISGylated products and therefore inhibits ubiquitin and ISG15-dependent host innate immunity. Also deubiquinates host NFKBIA, thereby interfering with NFKBIA degradation and impairing subsequent NF-kappa-B activation. Plays a role in the inhibition of the immune response by interacting with host IFITM1. This interaction leads to the proteasomal degradation of the IFN-induced antiviral protein IFITM1. Its function is as follows. Cleaves the majority of cleavage sites present in the C-terminus of the polyprotein. Triggers host apoptosis through caspase-3, -8, and -9 activations. Subverts host innate immune responses through its protease activity. Targets the NF-kappa-B essential modulator NEMO and mediates its cleavage. Blocks host interferon beta induction and downstream signaling by cleaving mitochondrial MAVS, dislodging it from the mitochondria. Impairs host defense by cleaving host mRNA-decapping enzyme DCP1A to attenuate its antiviral activity. Functionally, plays a role in the initial induction of autophagosomes from host endoplasmic reticulum. In terms of biological role, plays a role in the inhibition of host STAT3 signaling pathway by inducing the degradation of STAT3. Responsible for replication and transcription of the viral RNA genome. Its function is as follows. Displays RNA and DNA duplex-unwinding activities with 5' to 3' polarity. Functionally, plays a role in viral transcription/replication and prevents the simultaneous activation of host cell dsRNA sensors, such as MDA5/IFIH1, OAS, PKR and NLRP3 inflammasome. Acts by degrading the 5'-polyuridines generated during replication of the poly(A) region of viral genomic and subgenomic RNAs. Catalyzes a two-step reaction in which a 2'3'-cyclic phosphate (2'3'-cP) is first generated by 2'-O transesterification, which is then hydrolyzed to a 3'-phosphate (3'-P). If not degraded, poly(U) RNA would hybridize with poly(A) RNA tails and activate host dsRNA sensors. Also plays a role in the inhibition of host type I interferon production by recruiting host OTULIN to promote removal of linear ubiquitination targeting host NEMO. In Porcine reproductive and respiratory syndrome virus (strain HB-1) (PRRSV), this protein is Replicase polyprotein 1ab (rep).